The sequence spans 1138 residues: Exportin-6-B (1138 aa).

An Importin N-terminal domain is found at isoleucine 31–serine 97. Residues serine 291 to serine 307 are compositionally biased toward low complexity. The interval serine 291–proline 315 is disordered.

It belongs to the exportin family.

The protein localises to the nucleus. It localises to the cytoplasm. In terms of biological role, mediates the nuclear export of actin and profilin-actin complexes in somatic cells. Oocyte nuclei lack active actin export. Functionally, mediates the nuclear export of actin and profilin-actin complexes in somatic cells. In Xenopus laevis (African clawed frog), this protein is Exportin-6-B (xpo6-b).